A 1240-amino-acid chain; its full sequence is RNA-directed RNA polymerase VP2 (1240 aa).

The 249-residue stretch at 516 to 764 (LVANYINKHM…KLYALFGARI (249 aa)) folds into the RdRp catalytic domain.

This sequence belongs to the reoviridae RNA-directed RNA polymerase family.

It is found in the virion. The catalysed reaction is RNA(n) + a ribonucleoside 5'-triphosphate = RNA(n+1) + diphosphate. Functionally, RNA-directed RNA polymerase that is involved in transcription and genome replication. Following infection, it catalyzes the synthesis of fully conservative plus strands. After core assembly, which consists in recruitment of one capped plus-strand for each genomic segments and polymerase complexes, the polymerase switches mode and catalyzes the synthesis of complementary minus-strands. This chain is RNA-directed RNA polymerase VP2 (S2), found in Oncorhynchus keta (Chum salmon).